We begin with the raw amino-acid sequence, 1648 residues long: eIF-2-alpha kinase GCN2 (1648 aa).

Residues 1–26 (MAGGRGASGRGRAEPQESYSQRQDHE) form a disordered region. Residues 25–137 (HELQALEAIY…HHVQSFLSEH (113 aa)) enclose the RWD domain. A coiled-coil region spans residues 146–205 (HEEMLERQAQEKQQRLLEARRKEEQEQREILHEIQRRKEEIKEEKKRKEMAKQERLEITS). Phosphoserine is present on Ser-230. 2 Protein kinase domains span residues 286–538 (VGSD…HSFI) and 589–1000 (FEEL…SELL). ATP contacts are provided by residues 595-603 (LGKGAFGAV) and Lys-618. The segment at 661-784 (PAVPGTPPPD…CNQKDGSHEI (124 aa)) is disordered. Phosphothreonine is present on Thr-666. Polar residues-rich tracts occupy residues 673-686 (PQAQ…GKTS) and 704-722 (LSSS…STRF). Composition is skewed to acidic residues over residues 730 to 739 (SSDEEDEDER) and 753 to 763 (SDSDIIFDNED). Residues 775–784 (CNQKDGSHEI) show a composition bias toward basic and acidic residues. Catalysis depends on Asp-846, which acts as the Proton acceptor. At Thr-869 the chain carries Phosphothreonine. 2 positions are modified to phosphothreonine; by autocatalysis: Thr-898 and Thr-903. The tract at residues 1021–1492 (IDGKAYRTMM…DHVMQKLRTK (472 aa)) is histidyl-tRNA synthetase-like. Lys-1258 is modified (N6-acetyllysine).

The protein belongs to the protein kinase superfamily. Ser/Thr protein kinase family. GCN2 subfamily. As to quaternary structure, homodimer; homodimerization is important for kinase activation by uncharged tRNAs. Interacts with GCN1; this interaction stimulates EIF2AK4/GCN2 kinase activity and is impaired by IMPACT upon a variety of stress conditions, such as amino acid depletion, UV-C irradiation, proteasome inhibitor treatment and glucose deprivation. Interacts with DNAJC3; this interaction inhibits EIF2AK4/GCN2 kinase activity during endoplasmic reticulum (ER), hypothermic and amino acid-starving stress conditions. Interacts with MAP3K20; activates EIF2AK4/GCN2 kinase activity in response to moderate ribotoxic stress. Autophosphorylated; autophosphorylation on Thr-898 is increased upon amino acid starvation and in UV irradiation cells and inhibited in presence of IMPACT. As to expression, expressed in liver. Expressed predominantly in the hippocampal CA1 region and the dentate gyrus, and to a lesser degree in CA3 (at protein level). Expressed in liver, lung, brain, kidney, skeletal muscle and testis. Expressed weakly in heart and spleen. Expressed in the hippocampal CA1 and CA3 regions, the dentate gyrus and cerebellum. Isoform 1 is widely expressed. Isoform 1 is expressed in brain, liver, skeletal muscle and testis. Isoform 3 is expressed in lung, brain, testis, prostate and choroid plexus. Isoform 4 is expressed in muscle, lung, kidney, brain, testis and prostate.

The protein localises to the cytoplasm. The catalysed reaction is L-seryl-[protein] + ATP = O-phospho-L-seryl-[protein] + ADP + H(+). It catalyses the reaction L-threonyl-[protein] + ATP = O-phospho-L-threonyl-[protein] + ADP + H(+). With respect to regulation, (Microbial infection) Kinase activity is enhanced by alphavirus genomic RNA sequences. Kinase activity is stimulated upon binding to uncharged tRNAs. Activated by serum starvation (in vitro). Functionally, metabolic-stress sensing protein kinase that phosphorylates the alpha subunit of eukaryotic translation initiation factor 2 (EIF2S1/eIF-2-alpha) in response to low amino acid availability. Plays a role as an activator of the integrated stress response (ISR) required for adaptation to amino acid starvation. EIF2S1/eIF-2-alpha phosphorylation in response to stress converts EIF2S1/eIF-2-alpha into a global protein synthesis inhibitor, leading to a global attenuation of cap-dependent translation, and thus to a reduced overall utilization of amino acids, while concomitantly initiating the preferential translation of ISR-specific mRNAs, such as the transcriptional activator ATF4, and hence allowing ATF4-mediated reprogramming of amino acid biosynthetic gene expression to alleviate nutrient depletion. Required for the translational induction of protein kinase PRKCH following amino acid starvation. Binds uncharged tRNAs. Involved in cell cycle arrest by promoting cyclin D1 mRNA translation repression after the unfolded protein response pathway (UPR) activation or cell cycle inhibitor CDKN1A/p21 mRNA translation activation in response to amino acid deprivation. Plays a role in the consolidation of synaptic plasticity, learning as well as formation of long-term memory. Plays a role in neurite outgrowth inhibition. Plays a role in feeding behavior to maintain amino acid homeostasis; contributes to the innate aversion toward diets of imbalanced amino acid composition. Plays a proapoptotic role in response to glucose deprivation. Promotes global cellular protein synthesis repression in response to UV irradiation independently of the stress-activated protein kinase/c-Jun N-terminal kinase (SAPK/JNK) and p38 MAPK signaling pathways. Its function is as follows. (Microbial infection) Plays a role in the antiviral response against alphavirus infection; impairs early viral mRNA translation of the incoming genomic virus RNA, thus preventing alphavirus replication. In terms of biological role, (Microbial infection) Plays a role in modulating the adaptive immune response to Yellow fever virus infection; promotes dendritic cells to initiate autophagy and antigene presentation to both CD4(+) and CD8(+) T-cells under amino acid starvation. This is eIF-2-alpha kinase GCN2 from Mus musculus (Mouse).